The primary structure comprises 785 residues: Tripartite terminase subunit 1 (785 aa).

The C3H1-type zinc finger occupies 197-225; the sequence is CAVCFEELCVTANQGATIARRLADRICNH. 2 disordered regions span residues 433 to 452 and 457 to 489; these read GGAA…GDRV and GARG…GDIA. 696-703 provides a ligand contact to ATP; sequence FASVYRCG.

This sequence belongs to the herpesviridae TRM1 protein family. Associates with TRM2 and TRM3 to form the tripartite terminase complex. Interacts with portal protein.

The protein resides in the host nucleus. Functionally, component of the molecular motor that translocates viral genomic DNA in empty capsid during DNA packaging. Forms a tripartite terminase complex together with TRM2 and TRM3 in the host cytoplasm. Once the complex reaches the host nucleus, it interacts with the capsid portal vertex. This portal forms a ring in which genomic DNA is translocated into the capsid. TRM1 carries an endonuclease activity that plays an important role for the cleavage of concatemeric viral DNA into unit length genomes. This Human herpesvirus 1 (strain 17) (HHV-1) protein is Tripartite terminase subunit 1.